Reading from the N-terminus, the 325-residue chain is DNA-directed RNA polymerase subunit alpha (325 aa).

Residues 1–231 (MQNSLLKPRI…DQLNVFAALE (231 aa)) are alpha N-terminal domain (alpha-NTD). Residues 246-325 (VDPILLRPVD…ENWPPAGLEK (80 aa)) are alpha C-terminal domain (alpha-CTD).

Belongs to the RNA polymerase alpha chain family. As to quaternary structure, homodimer. The RNAP catalytic core consists of 2 alpha, 1 beta, 1 beta' and 1 omega subunit. When a sigma factor is associated with the core the holoenzyme is formed, which can initiate transcription.

It catalyses the reaction RNA(n) + a ribonucleoside 5'-triphosphate = RNA(n+1) + diphosphate. Functionally, DNA-dependent RNA polymerase catalyzes the transcription of DNA into RNA using the four ribonucleoside triphosphates as substrates. The polypeptide is DNA-directed RNA polymerase subunit alpha (Janthinobacterium sp. (strain Marseille) (Minibacterium massiliensis)).